The chain runs to 163 residues: Urease accessory protein UreE (163 aa).

A disordered region spans residues 144-163; it reads QPEPGAYGGSSAGSHDGHHH.

The protein belongs to the UreE family.

It localises to the cytoplasm. Its function is as follows. Involved in urease metallocenter assembly. Binds nickel. Probably functions as a nickel donor during metallocenter assembly. This Aliivibrio fischeri (strain ATCC 700601 / ES114) (Vibrio fischeri) protein is Urease accessory protein UreE.